Reading from the N-terminus, the 219-residue chain is PRELI domain-containing protein 1, mitochondrial (219 aa).

The PRELI/MSF1 domain maps to Thr-36 to Pro-174.

As to quaternary structure, forms a complex with TRIAP1 in the mitochondrion intermembrane space. Interacts with OPA1 and AIFM1.

It localises to the mitochondrion. It is found in the mitochondrion intermembrane space. It carries out the reaction a 1,2-diacyl-sn-glycero-3-phosphate(in) = a 1,2-diacyl-sn-glycero-3-phosphate(out). Involved in the modulation of the mitochondrial apoptotic pathway by ensuring the accumulation of cardiolipin (CL) in mitochondrial membranes. In vitro, the TRIAP1:PRELID1 complex mediates the transfer of phosphatidic acid (PA) between liposomes and probably functions as a PA transporter across the mitochondrion intermembrane space to provide PA for CL synthesis in the inner membrane. Regulates the mitochondrial apoptotic pathway in primary Th cells. Regulates Th cell differentiation by down-regulating STAT6 thereby reducing IL-4-induced Th2 cell number. May be important for the development of vital and immunocompetent organs. This chain is PRELI domain-containing protein 1, mitochondrial (PRELID1), found in Bos taurus (Bovine).